The sequence spans 104 residues: METIAFRMRLHPGKQDEYRRRHDAIWPELADALRAAGISDYWIFLDDDTHHLFAVLRRPADHRIAQLAETDVMRRWWAYMADLMATGPDGRPVEKALEPMFHLE.

Tyr18 serves as a coordination point for substrate. The active-site Proton donor is His22. Substrate-binding positions include Tyr41 and 76–77; that span reads WW.

It belongs to the rhamnose mutarotase family. Homodimer.

It is found in the cytoplasm. It carries out the reaction alpha-L-rhamnose = beta-L-rhamnose. The protein operates within carbohydrate metabolism; L-rhamnose metabolism. Functionally, involved in the anomeric conversion of L-rhamnose. This is L-rhamnose mutarotase from Burkholderia orbicola (strain MC0-3).